Reading from the N-terminus, the 303-residue chain is MATQTKHDWADDEDLEETTTTTAPTTDLPPPQKIQNKDGTWTIIEYRINDLGQKVKATRRVRYVVRREVVNPRVAERKTWAKFGDSANDPKGPAPDTTTVGENIIFRPSVNWRKEAKDEANDPNAQAMKDKLKDKKVKCRICNGEHFTARCPYKDTMAPIGEAGPADVAAGMGDEPAAAGPAAAGAAGAGKKGSYVPPAMRAGAGGAQGERMGGKYGERDDLATLRVTNVSEMAEEQELRDMFERFGRVTRVFLAKDRDTGMAKGFAFISYADRDDAVKACNKMDGFGFRHLILRVEFAKKAQ.

Residues 1–38 are disordered; that stretch reads MATQTKHDWADDEDLEETTTTTAPTTDLPPPQKIQNKD. Residues 223–301 form the RRM domain; the sequence is ATLRVTNVSE…LILRVEFAKK (79 aa).

Belongs to the eIF-3 subunit G family. In terms of assembly, component of the eukaryotic translation initiation factor 3 (eIF-3) complex.

The protein resides in the cytoplasm. Functionally, RNA-binding component of the eukaryotic translation initiation factor 3 (eIF-3) complex, which is involved in protein synthesis of a specialized repertoire of mRNAs and, together with other initiation factors, stimulates binding of mRNA and methionyl-tRNAi to the 40S ribosome. The eIF-3 complex specifically targets and initiates translation of a subset of mRNAs involved in cell proliferation. This subunit can bind 18S rRNA. In Chaetomium globosum (strain ATCC 6205 / CBS 148.51 / DSM 1962 / NBRC 6347 / NRRL 1970) (Soil fungus), this protein is Eukaryotic translation initiation factor 3 subunit G.